A 376-amino-acid chain; its full sequence is Putative type I restriction enzyme MpnIIP endonuclease subunit N-terminal part (376 aa).

The N-terminal section of a putative type I restriction enzyme that if reconstituted might recognize 5'-GAN(7)TAY-3' and cleave a random distance away. Subunit R is required for both nuclease and ATPase activities, but not for modification. This is Putative type I restriction enzyme MpnIIP endonuclease subunit N-terminal part from Mycoplasma pneumoniae (strain ATCC 29342 / M129 / Subtype 1) (Mycoplasmoides pneumoniae).